Consider the following 458-residue polypeptide: BUD13 homolog (458 aa).

Disordered regions lie at residues 16–37 (SGDI…SGLR), 81–328 (KQTF…TEEL), and 437–458 (AKTE…AEYE). Positions 138–148 (NRHDSDKDNSP) are enriched in basic and acidic residues. Basic residues-rich tracts occupy residues 175-185 (RNRRSPPRTRR) and 208-218 (PRRRPSSPARR). Basic and acidic residues-rich tracts occupy residues 219–243 (RKDD…KKEE), 266–284 (RDLK…KMFE), and 314–328 (DQAK…TEEL). Residues 262–356 (LQSARDLKEE…AQLEEMARVA (95 aa)) adopt a coiled-coil conformation.

This sequence belongs to the CWC26 family.

The chain is BUD13 homolog from Caenorhabditis elegans.